The following is a 184-amino-acid chain: Nucleoside triphosphate pyrophosphatase (184 aa).

Catalysis depends on Asp-71, which acts as the Proton acceptor.

This sequence belongs to the Maf family. It depends on a divalent metal cation as a cofactor.

The protein resides in the cytoplasm. It carries out the reaction a ribonucleoside 5'-triphosphate + H2O = a ribonucleoside 5'-phosphate + diphosphate + H(+). The enzyme catalyses a 2'-deoxyribonucleoside 5'-triphosphate + H2O = a 2'-deoxyribonucleoside 5'-phosphate + diphosphate + H(+). Its function is as follows. Nucleoside triphosphate pyrophosphatase. May have a dual role in cell division arrest and in preventing the incorporation of modified nucleotides into cellular nucleic acids. The polypeptide is Nucleoside triphosphate pyrophosphatase (Synechococcus sp. (strain CC9605)).